The sequence spans 207 residues: Vexin (207 aa).

The tract at residues 56–100 (ELLPHRGDRRDPGDRRRFGRLQTARPPTAHPAKASARPVGISEPK) is disordered. Basic and acidic residues predominate over residues 58 to 71 (LPHRGDRRDPGDRR).

Belongs to the vexin family.

The protein localises to the cell membrane. It is found in the nucleus. Required for neurogenesis in the neural plate and retina. Strongly cooperates with neural bHLH factors to promote neurogenesis. This chain is Vexin, found in Homo sapiens (Human).